We begin with the raw amino-acid sequence, 328 residues long: Probable voltage-gated potassium channel subunit beta (328 aa).

NADP(+) contacts are provided by tryptophan 21, glutamine 27, and aspartate 49. Tyrosine 54 serves as the catalytic Proton donor/acceptor. Residues serine 152, glutamine 178, tryptophan 207, serine 208, proline 209, leucine 210, alanine 211, lysine 218, arginine 229, glycine 285, threonine 287, glutamine 291, glutamate 294, and asparagine 295 each contribute to the NADP(+) site.

The protein belongs to the shaker potassium channel beta subunit family. In terms of assembly, forms heteromultimeric complexes with potassium channel alpha subunits. Expressed in late-developed leaves with the highest expression in the flag leaf (at protein level).

Functionally, probable accessory potassium channel protein which modulates the activity of the pore-forming alpha subunit. This is Probable voltage-gated potassium channel subunit beta (KOB1) from Oryza sativa subsp. japonica (Rice).